The following is a 435-amino-acid chain: MSHVHQAGEAFASSPAESRQEIRNYTMNFGPQHPAAHGVLRLILEMDGETIMRADPHVGLLHRGTEKLAESKPFNQSIGYMDRLDYVSMMCNEHAYVRSIETLMGIEAPERAQYIRTLFDEITRILNHLMWLGSNALDLGAMAVMLYAFREREELMDCYEAVSGARMHAAYYRPGGVYRDLPDHMPKYKESRWHKGKALKNLNAAREGSLLDFLENFTNEFPGRVDEYETLLTDNRIWKQRTVGIGVVTPELAHQWGMTGVMLRGSGIAWDLRKKRPYAKYDAVDFDIPLGKEGDCYDRYLVRIAEMRESNRIIKQCVAWLKANPGPVMVKNFKVAPPKREDMKDDMEALIHHFKLFSEGYCVPAGETYAAVEAPKGEFGCYLVSDGANKPFRVHLRAPGFAHLSSIDSIVRGHMLADVVAMIGTYDLVFGEVDR.

Belongs to the complex I 49 kDa subunit family. NDH-1 is composed of 14 different subunits. Subunits NuoB, C, D, E, F, and G constitute the peripheral sector of the complex.

The protein localises to the cell inner membrane. It carries out the reaction a quinone + NADH + 5 H(+)(in) = a quinol + NAD(+) + 4 H(+)(out). Its function is as follows. NDH-1 shuttles electrons from NADH, via FMN and iron-sulfur (Fe-S) centers, to quinones in the respiratory chain. The immediate electron acceptor for the enzyme in this species is believed to be ubiquinone. Couples the redox reaction to proton translocation (for every two electrons transferred, four hydrogen ions are translocated across the cytoplasmic membrane), and thus conserves the redox energy in a proton gradient. The protein is NADH-quinone oxidoreductase subunit D 2 of Stenotrophomonas maltophilia (strain R551-3).